We begin with the raw amino-acid sequence, 70 residues long: U2-agatoxin-Ao1j (70 aa).

An N-terminal signal peptide occupies residues 1–20; sequence MRAIISLLLISAMVFSMIAA. Residues 21–34 constitute a propeptide that is removed on maturation; it reads VPEEEGLQLSEDER. Cystine bridges form between Cys37/Cys53, Cys44/Cys58, and Cys52/Cys68. Leu69 carries the post-translational modification Leucine amide.

It belongs to the neurotoxin 01 (U2-agtx) family. In terms of tissue distribution, expressed by the venom gland.

The protein resides in the secreted. Functionally, insect active toxin causing rapid but reversible paralysis in crickets. No activity shown in mammals. Does not show effect on mammalian voltage-gated calcium channels. The polypeptide is U2-agatoxin-Ao1j (Agelena orientalis (Funnel-web spider)).